A 216-amino-acid polypeptide reads, in one-letter code: Octanoyltransferase (216 aa).

The BPL/LPL catalytic domain maps to 30–204; sequence KNNINEIWLL…NCKKFLMMNN (175 aa). Substrate-binding positions include 68–75, 135–137, and 148–150; these read RGGHMTFH, SIG, and GLA. The active-site Acyl-thioester intermediate is Cys166.

This sequence belongs to the LipB family.

It localises to the cytoplasm. It catalyses the reaction octanoyl-[ACP] + L-lysyl-[protein] = N(6)-octanoyl-L-lysyl-[protein] + holo-[ACP] + H(+). The protein operates within protein modification; protein lipoylation via endogenous pathway; protein N(6)-(lipoyl)lysine from octanoyl-[acyl-carrier-protein]: step 1/2. In terms of biological role, catalyzes the transfer of endogenously produced octanoic acid from octanoyl-acyl-carrier-protein onto the lipoyl domains of lipoate-dependent enzymes. Lipoyl-ACP can also act as a substrate although octanoyl-ACP is likely to be the physiological substrate. This is Octanoyltransferase from Wigglesworthia glossinidia brevipalpis.